Reading from the N-terminus, the 423-residue chain is Histone acetyltransferase type B subunit 2 (423 aa).

WD repeat units lie at residues 138–174 (PHIE…TLEE), 175–224 (SKAQ…KPKS), 228–268 (SHDD…EPVK), 271–311 (PTAS…SPLH), and 315–355 (GHQD…AEQS). The interval 357–361 (DDADD) is interaction with the histone H4 N-terminus. The WD 6 repeat unit spans residues 372 to 412 (GHRSPVNEFSFNPQIPWLLASTEEDNVIQAWKVSMKLVNAS).

It belongs to the WD repeat RBAP46/RBAP48/MSI1 family. As to quaternary structure, component of the HAT-B complex composed of at least HAT1 and HAT2. The HAT-B complex binds to histone H4 tail.

The protein resides in the cytoplasm. Its subcellular location is the nucleus. Regulatory subunit of the histone acetylase B (HAT-B) complex. The complex acetylates 'Lys-12' of histone H4 which is required for telomeric silencing. The sequence is that of Histone acetyltransferase type B subunit 2 (HAT2) from Eremothecium gossypii (strain ATCC 10895 / CBS 109.51 / FGSC 9923 / NRRL Y-1056) (Yeast).